Consider the following 464-residue polypeptide: Protein FAM90A12 (464 aa).

Disordered stretches follow at residues 1–42 (MMAR…DPRL), 70–389 (PATL…HDGA), and 411–437 (APSF…SEAP). Basic and acidic residues-rich tracts occupy residues 74-89 (GKKE…KPRA) and 97-114 (NKDK…DPQR). A compositionally biased stretch (low complexity) spans 180–197 (LASLSPLRKASLSSSSSL).

This sequence belongs to the FAM90 family.

In Homo sapiens (Human), this protein is Protein FAM90A12.